A 619-amino-acid chain; its full sequence is Protein Atg16l2 (619 aa).

A disordered region spans residues 57-78 (LQPEPNSVTPTTHQGPWEESEL). Positions 60–70 (EPNSVTPTTHQ) are enriched in polar residues. Residues 116 to 227 (AALGTLESEL…QARVSQELKK (112 aa)) adopt a coiled-coil conformation. 7 WD repeats span residues 334 to 373 (AHLS…LEAN), 378 to 417 (GAGG…SKET), 420 to 454 (GHKD…LGRA), 455 to 498 (YCSR…CTQV), 500 to 539 (PVQG…IRQV), 546 to 585 (KCGS…LESR), and 589 to 619 (PHCA…VLWQ).

This sequence belongs to the WD repeat ATG16 family. In terms of assembly, homooligomer. Heterooligomer with ATG16L1. Interacts with ATG5. Self-oligomerizes to form a 800-kDa complex composed of ATG12-ATG5 and ATG16L2. Interacts with RAB33B.

It localises to the cytoplasm. Its subcellular location is the cytosol. In terms of biological role, may play a role in regulating epithelial homeostasis in an ATG16L1-dependent manner. This Homo sapiens (Human) protein is Protein Atg16l2 (ATG16L2).